A 214-amino-acid chain; its full sequence is Ribonuclease HII (214 aa).

Residues 26 to 214 (EIVCGVDEAG…PVREAFDLIR (189 aa)) form the RNase H type-2 domain. Residues aspartate 32, glutamate 33, and aspartate 124 each contribute to the a divalent metal cation site.

This sequence belongs to the RNase HII family. It depends on Mn(2+) as a cofactor. The cofactor is Mg(2+).

The protein resides in the cytoplasm. The enzyme catalyses Endonucleolytic cleavage to 5'-phosphomonoester.. Its function is as follows. Endonuclease that specifically degrades the RNA of RNA-DNA hybrids. This Burkholderia pseudomallei (strain 668) protein is Ribonuclease HII.